The primary structure comprises 257 residues: Proteasome assembly chaperone 1 (257 aa).

This sequence belongs to the PSMG1 family. Forms a heterodimer with psmg2.

Its function is as follows. Chaperone protein which promotes assembly of the 20S proteasome as part of a heterodimer with psmg2. The polypeptide is Proteasome assembly chaperone 1 (psmg1) (Nematostella vectensis (Starlet sea anemone)).